The sequence spans 370 residues: Myomodulin neuropeptides 1 (370 aa).

The N-terminal stretch at 1–18 is a signal peptide; that stretch reads MQVYMLLPLAVFASLTYQ. A propeptide spanning residues 19 to 50 is cleaved from the precursor; sequence GACEETAAAQTSSDASTSSASSEHAENELSRA. The segment covering 28–40 has biased composition (low complexity); that stretch reads QTSSDASTSSASS. The segment at 28–52 is disordered; sequence QTSSDASTSSASSEHAENELSRAKR. Leu60 and Leu69 each carry leucine amide. The propeptide occupies 73-190; the sequence is GGPVEPESEE…EPEEGGLGEE (118 aa). A leucine amide mark is found at Leu199 and Leu209. The segment covering 210–226 has biased composition (basic and acidic residues); it reads GKREGEEGDEMDKKQDE. A disordered region spans residues 210–230; that stretch reads GKREGEEGDEMDKKQDESLND. Residues 213-237 constitute a propeptide that is removed on maturation; the sequence is EGEEGDEMDKKQDESLNDDFENDDI. Residues Leu246, Leu256, Leu266, Leu276, Leu286, Leu296, Leu306, Leu316, Leu326, Leu336, and Leu346 each carry the leucine amide modification. The interval 344 to 370 is disordered; the sequence is LRLGKRDDDEKEKKSLNMSRLGKRSTQ. The segment covering 347 to 358 has biased composition (basic and acidic residues); it reads GKRDDDEKEKKS. A propeptide spanning residues 350 to 355 is cleaved from the precursor; the sequence is DDDEKE. Leu364 is modified (leucine amide). A propeptide spanning residues 368-370 is cleaved from the precursor; the sequence is STQ.

Expressed in all ganglia of the CNS, but only in a subset of neurons including L10 in the abdominal ganglion and B16 in the buccal ganglion.

It is found in the secreted. Its function is as follows. Exogenous application of myomodulins potentiates ARC muscle contraction. The protein is Myomodulin neuropeptides 1 (MYOMOD1) of Aplysia californica (California sea hare).